Here is a 549-residue protein sequence, read N- to C-terminus: DNA polymerase lambda (549 aa).

The BRCT domain occupies 17 to 116 (DPDGMFRGVS…ERLPEHKFAI (100 aa)). Residues 126–197 (KEGGAAGSGV…ASGDSKETIA (72 aa)) are disordered. Positions 149–175 (PENRKETAGGNRESRDAIAHPNEDSDV) are enriched in basic and acidic residues. Positions 180-197 (STCTSSQSASGDSKETIA) are enriched in polar residues. Residues 233-247 (NIYRALGDDRRSFSY) form a DNA-binding region. His280 is an active-site residue. Residues 315–318 (GPAT) are DNA-binding. DCTP-binding positions include Arg356, 387-390 (SYRR), and 396-399 (GDMD). Positions 390–399 (RGKSSCGDMD) are involved in primer binding. 3 residues coordinate Mn(2+): Asp397, Asp399, and Asp464. The tract at residues 438 to 479 (IEGTDCGVDTYFGLCTYPGRELRHRIDLKVYPRNRHAFGLLA) is DNA-binding. Asn487 serves as a coordination point for dCTP.

It belongs to the DNA polymerase type-X family. As to quaternary structure, interacts with PCNA. Requires Mn(2+) as cofactor. In terms of tissue distribution, expressed in proliferating tissues. Expressed in roots, root apex, young leaves, shoot apical meristem (SAM), flag leaves and panicles.

It is found in the nucleus. The catalysed reaction is DNA(n) + a 2'-deoxyribonucleoside 5'-triphosphate = DNA(n+1) + diphosphate. In terms of biological role, repair polymerase involved in base excision repair (BER) and responsible for repair of lesions that give rise to abasic (AP) sites in DNA. Has both DNA polymerase and terminal transferase activities. Has a 5'-deoxyribose-5-phosphate lyase (dRP lyase) activity. The sequence is that of DNA polymerase lambda from Oryza sativa subsp. japonica (Rice).